A 431-amino-acid chain; its full sequence is Mannan endo-1,4-beta-mannosidase 7 (431 aa).

Positions M1 to A25 are cleaved as a signal peptide. Residues W87 and N202 each contribute to the substrate site. E203 functions as the Proton donor in the catalytic mechanism. Y280 lines the substrate pocket. E320 functions as the Nucleophile in the catalytic mechanism. Position 362 (W362) interacts with substrate.

The protein belongs to the glycosyl hydrolase 5 (cellulase A) family. Expressed in stems, flowers, siliques and seeds. Expressed in root vasculature, leaf hydathodes, anther filaments, stigma, sepal vasculature, at the base and apical parts of siliques, and replum. Expressed in the micropylar endosperm and radicle tip in early germinating seeds.

It is found in the secreted. It catalyses the reaction Random hydrolysis of (1-&gt;4)-beta-D-mannosidic linkages in mannans, galactomannans and glucomannans.. Its function is as follows. Required for both, loosening of the micropylar endosperm, and rupture of the seed coat in germinating seeds. May participate in the hydrolysis of the mannans in the cell wall of germinating seeds. This Arabidopsis thaliana (Mouse-ear cress) protein is Mannan endo-1,4-beta-mannosidase 7 (MAN7).